Here is a 129-residue protein sequence, read N- to C-terminus: Small ribosomal subunit protein uS11 (129 aa).

It belongs to the universal ribosomal protein uS11 family. Part of the 30S ribosomal subunit. Interacts with proteins S7 and S18. Binds to IF-3.

Functionally, located on the platform of the 30S subunit, it bridges several disparate RNA helices of the 16S rRNA. Forms part of the Shine-Dalgarno cleft in the 70S ribosome. The protein is Small ribosomal subunit protein uS11 of Caulobacter vibrioides (strain ATCC 19089 / CIP 103742 / CB 15) (Caulobacter crescentus).